The sequence spans 412 residues: Alpha-1-antitrypsin 1-3 (412 aa).

The signal sequence occupies residues methionine 1–alanine 24. N-linked (GlcNAc...) asparagine glycans are attached at residues asparagine 64, asparagine 101, and asparagine 265. The RCL stretch occupies residues alanine 368 to histidine 387.

This sequence belongs to the serpin family.

The protein resides in the secreted. In terms of biological role, inhibitor of serine proteases. Can inhibit trypsin and chymotrypsin; relatively ineffective against elastase. The sequence is that of Alpha-1-antitrypsin 1-3 (Serpina1c) from Mus musculus (Mouse).